The sequence spans 208 residues: Large ribosomal subunit protein bL9 (208 aa).

The disordered stretch occupies residues 168 to 208; it reads GKVEKGSCTEGESLELGSVDNDINSGNVDSNESEKQDSVSE. Polar residues predominate over residues 188–197; that stretch reads NDINSGNVDS. The span at 199 to 208 shows a compositional bias: basic and acidic residues; that stretch reads ESEKQDSVSE.

The protein belongs to the bacterial ribosomal protein bL9 family.

Binds to the 23S rRNA. The protein is Large ribosomal subunit protein bL9 of Ehrlichia chaffeensis (strain ATCC CRL-10679 / Arkansas).